Here is an 865-residue protein sequence, read N- to C-terminus: Protein translocase subunit SecA (865 aa).

ATP-binding positions include Gln-93, 111–115 (GEGKT), and Asp-501. Zn(2+) is bound by residues Cys-841, Cys-843, Cys-852, and Cys-853.

This sequence belongs to the SecA family. In terms of assembly, monomer and homodimer. Part of the essential Sec protein translocation apparatus which comprises SecA, SecYEG and auxiliary proteins SecDF-YajC and YidC. The cofactor is Zn(2+).

The protein resides in the cell inner membrane. It localises to the cytoplasm. It carries out the reaction ATP + H2O + cellular proteinSide 1 = ADP + phosphate + cellular proteinSide 2.. In terms of biological role, part of the Sec protein translocase complex. Interacts with the SecYEG preprotein conducting channel. Has a central role in coupling the hydrolysis of ATP to the transfer of proteins into and across the cell membrane, serving as an ATP-driven molecular motor driving the stepwise translocation of polypeptide chains across the membrane. The chain is Protein translocase subunit SecA from Helicobacter pylori (strain Shi470).